Consider the following 636-residue polypeptide: Golgin subfamily A member 8F (636 aa).

Disordered regions lie at residues 1-72 (MAEE…SATL) and 107-127 (NKQV…KQKA). Residues 38–50 (TNGSIHETATSGG) are compositionally biased toward polar residues. Coiled coils occupy residues 93-148 (VSQL…LNTD), 211-263 (LEQS…MSQE), and 306-412 (EVEL…QQKQ). Residues 109–127 (QVEHQLEEEKKANNEKQKA) show a composition bias toward basic and acidic residues. 4 disordered regions span residues 344–364 (LREQ…QEER), 422–449 (ALPG…SIPQ), 496–537 (PITK…GVAA), and 588–612 (PVQG…QDHQ). The segment covering 429-441 (GGGHLDSEGEEAP) has biased composition (basic and acidic residues). Gly residues predominate over residues 509 to 522 (PGGGHHQAGPGQGG).

Belongs to the GOLGA8 family.

This chain is Golgin subfamily A member 8F, found in Homo sapiens (Human).